A 121-amino-acid chain; its full sequence is Large ribosomal subunit protein uL18 (121 aa).

The protein belongs to the universal ribosomal protein uL18 family. As to quaternary structure, part of the 50S ribosomal subunit; part of the 5S rRNA/L5/L18/L25 subcomplex. Contacts the 5S and 23S rRNAs.

This is one of the proteins that bind and probably mediate the attachment of the 5S RNA into the large ribosomal subunit, where it forms part of the central protuberance. This Spiroplasma kunkelii protein is Large ribosomal subunit protein uL18.